The sequence spans 252 residues: Imidazole glycerol phosphate synthase subunit HisF (252 aa).

Residues aspartate 11 and aspartate 130 contribute to the active site.

Belongs to the HisA/HisF family. In terms of assembly, heterodimer of HisH and HisF.

It is found in the cytoplasm. It carries out the reaction 5-[(5-phospho-1-deoxy-D-ribulos-1-ylimino)methylamino]-1-(5-phospho-beta-D-ribosyl)imidazole-4-carboxamide + L-glutamine = D-erythro-1-(imidazol-4-yl)glycerol 3-phosphate + 5-amino-1-(5-phospho-beta-D-ribosyl)imidazole-4-carboxamide + L-glutamate + H(+). The protein operates within amino-acid biosynthesis; L-histidine biosynthesis; L-histidine from 5-phospho-alpha-D-ribose 1-diphosphate: step 5/9. IGPS catalyzes the conversion of PRFAR and glutamine to IGP, AICAR and glutamate. The HisF subunit catalyzes the cyclization activity that produces IGP and AICAR from PRFAR using the ammonia provided by the HisH subunit. The chain is Imidazole glycerol phosphate synthase subunit HisF from Citrifermentans bemidjiense (strain ATCC BAA-1014 / DSM 16622 / JCM 12645 / Bem) (Geobacter bemidjiensis).